Consider the following 378-residue polypeptide: Cytochrome b (378 aa).

A run of 4 helical transmembrane segments spans residues 34-54 (FGSLLGLCLIIQILTGLFLAM), 78-99 (WFLRICHANGASFFFACLFIHV), 114-134 (WMIGVIILFMVMATGFLGYVL), and 179-199 (FFTFHFILPFIVLALTMIHLL). 2 residues coordinate heme b: His84 and His98. Residues His183 and His197 each coordinate heme b. A ubiquinone is bound at residue His202. The next 4 membrane-spanning stretches (helical) occupy residues 227–247 (YKDIVGFIIFMWILIGFIWKF), 289–309 (LGGVIALVLSIAILMILPFTH), 321–341 (LNQILFWNMVIVASLLTWIGA), and 348–368 (YVLTGQILTVLYFSYFIINPL).

Belongs to the cytochrome b family. As to quaternary structure, the main subunits of complex b-c1 are: cytochrome b, cytochrome c1 and the Rieske protein. The cofactor is heme b.

It localises to the mitochondrion inner membrane. Component of the ubiquinol-cytochrome c reductase complex (complex III or cytochrome b-c1 complex) that is part of the mitochondrial respiratory chain. The b-c1 complex mediates electron transfer from ubiquinol to cytochrome c. Contributes to the generation of a proton gradient across the mitochondrial membrane that is then used for ATP synthesis. The protein is Cytochrome b of Aedes aegypti (Yellowfever mosquito).